The sequence spans 328 residues: Probable membrane-associated kinase regulator 4 (328 aa).

The disordered stretch occupies residues 213-253 (GQIKTERPKKQSNGSVSGSHRRSFSVSMRRQAAKSSNNKSS). Residues 223 to 240 (QSNGSVSGSHRRSFSVSM) show a composition bias toward polar residues.

Its subcellular location is the cell membrane. The polypeptide is Probable membrane-associated kinase regulator 4 (MAKR4) (Arabidopsis thaliana (Mouse-ear cress)).